A 329-amino-acid polypeptide reads, in one-letter code: Glycerol-3-phosphate dehydrogenase [NAD(P)+] (329 aa).

NADPH is bound by residues tryptophan 11, arginine 30, and lysine 103. Sn-glycerol 3-phosphate contacts are provided by lysine 103, glycine 132, and serine 134. Alanine 136 is a binding site for NADPH. Sn-glycerol 3-phosphate is bound by residues lysine 187, aspartate 240, serine 250, arginine 251, and asparagine 252. The active-site Proton acceptor is the lysine 187. Residue arginine 251 coordinates NADPH. Valine 275 and glutamate 277 together coordinate NADPH.

Belongs to the NAD-dependent glycerol-3-phosphate dehydrogenase family.

It localises to the cytoplasm. It catalyses the reaction sn-glycerol 3-phosphate + NAD(+) = dihydroxyacetone phosphate + NADH + H(+). The catalysed reaction is sn-glycerol 3-phosphate + NADP(+) = dihydroxyacetone phosphate + NADPH + H(+). Its pathway is membrane lipid metabolism; glycerophospholipid metabolism. Catalyzes the reduction of the glycolytic intermediate dihydroxyacetone phosphate (DHAP) to sn-glycerol 3-phosphate (G3P), the key precursor for phospholipid synthesis. This Dechloromonas aromatica (strain RCB) protein is Glycerol-3-phosphate dehydrogenase [NAD(P)+].